The chain runs to 700 residues: Polyribonucleotide nucleotidyltransferase (700 aa).

2 residues coordinate Mg(2+): D486 and D492. The KH domain occupies 554 to 613 (PKIISTTINPDKIREVIGPGGKMINKIIDETGVKIDINDDGRVYIFSSDIQAGKRARSMI). In terms of domain architecture, S1 motif spans 623–691 (GQVFLGRVIR…KQGRVNLSRK (69 aa)).

Belongs to the polyribonucleotide nucleotidyltransferase family. Requires Mg(2+) as cofactor.

It localises to the cytoplasm. The enzyme catalyses RNA(n+1) + phosphate = RNA(n) + a ribonucleoside 5'-diphosphate. In terms of biological role, involved in mRNA degradation. Catalyzes the phosphorolysis of single-stranded polyribonucleotides processively in the 3'- to 5'-direction. The polypeptide is Polyribonucleotide nucleotidyltransferase (Acetivibrio thermocellus (strain ATCC 27405 / DSM 1237 / JCM 9322 / NBRC 103400 / NCIMB 10682 / NRRL B-4536 / VPI 7372) (Clostridium thermocellum)).